Here is a 158-residue protein sequence, read N- to C-terminus: Crossover junction endodeoxyribonuclease RuvC (158 aa).

Residues D7, E66, and D139 contribute to the active site. Positions 7, 66, and 139 each coordinate Mg(2+).

Belongs to the RuvC family. As to quaternary structure, homodimer which binds Holliday junction (HJ) DNA. The HJ becomes 2-fold symmetrical on binding to RuvC with unstacked arms; it has a different conformation from HJ DNA in complex with RuvA. In the full resolvosome a probable DNA-RuvA(4)-RuvB(12)-RuvC(2) complex forms which resolves the HJ. Mg(2+) is required as a cofactor.

The protein resides in the cytoplasm. It carries out the reaction Endonucleolytic cleavage at a junction such as a reciprocal single-stranded crossover between two homologous DNA duplexes (Holliday junction).. The RuvA-RuvB-RuvC complex processes Holliday junction (HJ) DNA during genetic recombination and DNA repair. Endonuclease that resolves HJ intermediates. Cleaves cruciform DNA by making single-stranded nicks across the HJ at symmetrical positions within the homologous arms, yielding a 5'-phosphate and a 3'-hydroxyl group; requires a central core of homology in the junction. The consensus cleavage sequence is 5'-(A/T)TT(C/G)-3'. Cleavage occurs on the 3'-side of the TT dinucleotide at the point of strand exchange. HJ branch migration catalyzed by RuvA-RuvB allows RuvC to scan DNA until it finds its consensus sequence, where it cleaves and resolves the cruciform DNA. The protein is Crossover junction endodeoxyribonuclease RuvC of Campylobacter jejuni subsp. jejuni serotype O:6 (strain 81116 / NCTC 11828).